Here is a 920-residue protein sequence, read N- to C-terminus: WD repeat-containing protein 47 (920 aa).

The 33-residue stretch at 10–42 folds into the LisH domain; it reads KEVEIIKLILDFLNSKKLHISMLALEKESGVIN. A CTLH domain is found at 45 to 102; that stretch reads FSDDMLFLRQLILDGQWDEVLQFIQPLECMEKFDKKRFRYIILKQKFLEALCVNNAMS. At threonine 285 the chain carries Phosphothreonine. Phosphoserine is present on residues serine 289, serine 292, serine 297, and serine 312. Residues 371 to 380 show a composition bias toward basic and acidic residues; it reads YEESPERSDT. Positions 371-422 are disordered; the sequence is YEESPERSDTPVEAQQPVSSEAMCQGSGLEKEPANGAQNPVPAKQEKNELRD. At serine 423 the chain carries Phosphoserine. Positions 501–594 are disordered; it reads LNQQCSGSKN…RSKGEEDDKS (94 aa). A compositionally biased stretch (low complexity) spans 506–523; sequence SGSKNNGSNNSSVTSFST. Over residues 538–552 the composition is skewed to polar residues; the sequence is NIHTSTPRNPGSTNH. Position 543 is a phosphothreonine (threonine 543). WD repeat units lie at residues 605–644, 660–699, 707–749, 754–792, 799–838, 841–880, and 887–919; these read EDTQAVRAVAFHPSGSLYAVGSNSKTLRVCAYPEKMDASA, HHKGSIYCVAWSPCGQLLATGSNDKYVKVLPFNAETCNAT, MHDG…GQGL, GHTGHILALYTWSGWMIASGSQDKTVRFWDLRVPSCVRV, GTGSAVASVAVDPSGRLLATGQEDSSCMLYDIRGGRMVQS, PHSSDVRSVRFSPGAHYLLTGSYDMKIKVTDLQGDLTKQL, and EHKDKVIQCRWHTQDLSFLSSSADRTVTLWTYS.

In terms of assembly, interacts with MAP1S (via WD repeats). As to expression, enriched in the nervous system (at protein level).

It is found in the cytoplasm. It localises to the cytoskeleton. The polypeptide is WD repeat-containing protein 47 (Wdr47) (Mus musculus (Mouse)).